The primary structure comprises 134 residues: UPF0412 protein YaaI (134 aa).

The signal sequence occupies residues Met-1–Ala-23.

This sequence belongs to the UPF0412 family.

The sequence is that of UPF0412 protein YaaI from Salmonella agona (strain SL483).